The following is a 213-amino-acid chain: MSHSKSSQRWLKEHFSDPFVKKAQAEGMRSRAAYKLEEILKRDRILRPNMVVIDLGAAPGGWSQQIRKQMGDSGRVIALDIVKMAPLVGIEFLQGDFRDKAVLSQLEIMLKGQPVDLVLSDMAPNKSGIDVMDQPRMMYLAELAMDFADIHVKPGGSFLIKLFHGVGSDGYIRQLRHRYKKVAIRKPLASRKRSPEVYILGDGKLTQNEVSCS.

S-adenosyl-L-methionine contacts are provided by glycine 60, tryptophan 62, aspartate 80, aspartate 96, and aspartate 121. Lysine 161 functions as the Proton acceptor in the catalytic mechanism.

It belongs to the class I-like SAM-binding methyltransferase superfamily. RNA methyltransferase RlmE family.

The protein resides in the cytoplasm. It catalyses the reaction uridine(2552) in 23S rRNA + S-adenosyl-L-methionine = 2'-O-methyluridine(2552) in 23S rRNA + S-adenosyl-L-homocysteine + H(+). Its function is as follows. Specifically methylates the uridine in position 2552 of 23S rRNA at the 2'-O position of the ribose in the fully assembled 50S ribosomal subunit. In Xylella fastidiosa (strain M23), this protein is Ribosomal RNA large subunit methyltransferase E.